The following is a 374-amino-acid chain: UDP-N-acetylglucosamine--N-acetylmuramyl-(pentapeptide) pyrophosphoryl-undecaprenol N-acetylglucosamine transferase (374 aa).

UDP-N-acetyl-alpha-D-glucosamine contacts are provided by residues 14 to 16, Asn125, Arg168, Ser196, and Gln297; that span reads TGG.

Belongs to the glycosyltransferase 28 family. MurG subfamily.

It localises to the cell inner membrane. It carries out the reaction di-trans,octa-cis-undecaprenyl diphospho-N-acetyl-alpha-D-muramoyl-L-alanyl-D-glutamyl-meso-2,6-diaminopimeloyl-D-alanyl-D-alanine + UDP-N-acetyl-alpha-D-glucosamine = di-trans,octa-cis-undecaprenyl diphospho-[N-acetyl-alpha-D-glucosaminyl-(1-&gt;4)]-N-acetyl-alpha-D-muramoyl-L-alanyl-D-glutamyl-meso-2,6-diaminopimeloyl-D-alanyl-D-alanine + UDP + H(+). It functions in the pathway cell wall biogenesis; peptidoglycan biosynthesis. Its function is as follows. Cell wall formation. Catalyzes the transfer of a GlcNAc subunit on undecaprenyl-pyrophosphoryl-MurNAc-pentapeptide (lipid intermediate I) to form undecaprenyl-pyrophosphoryl-MurNAc-(pentapeptide)GlcNAc (lipid intermediate II). The chain is UDP-N-acetylglucosamine--N-acetylmuramyl-(pentapeptide) pyrophosphoryl-undecaprenol N-acetylglucosamine transferase from Rhodopseudomonas palustris (strain BisA53).